A 1681-amino-acid chain; its full sequence is Sodium channel protein type 7 subunit alpha (1681 aa).

Over 1 to 118 (MLTSPEPKGL…RRAAIKALVH (118 aa)) the chain is Cytoplasmic. An I repeat occupies 101-402 (TLSPLNSLRR…ILTMTYEKEK (302 aa)). Residues 119–138 (PLFRLLILISVLTDSILMCM) traverse the membrane as a helical segment. The Extracellular portion of the chain corresponds to 139 to 142 (SNLP). A helical transmembrane segment spans residues 143-168 (EWILAIENTLLGIYAFEILVKVIARG). The Cytoplasmic segment spans residues 169-179 (IWAGSFSFLGD). A helical membrane pass occupies residues 180–197 (LWNWLDFSVTLFELITRF). Topologically, residues 198–201 (SPLS) are extracellular. A helical transmembrane segment spans residues 202-220 (SFLMLKTIRTFRILKIIPL). Residues 221–238 (NHGLQSIVMTLAQCLKKL) lie on the Cytoplasmic side of the membrane. A helical transmembrane segment spans residues 239-260 (FGAIALALFFLAVFSLLGMGLF). At 261–339 (MGNLKHKCLR…PDNGFTSFDN (79 aa)) the chain is on the extracellular side. A disulfide bridge links cysteine 268 with cysteine 308. N-linked (GlcNAc...) asparagine glycosylation is found at asparagine 277, asparagine 282, asparagine 288, and asparagine 310. Positions 340-367 (FGWSLLAMFRLMTQDYPELLYHQILYAS) form an intramembrane region, pore-forming. Residue glycine 368 is a topological domain, extracellular. Residues 369–408 (KVYMIFFVMISFWFAFYLTSLFLGILTMTYEKEKQRACEE) form a helical membrane-spanning segment. Residues 409 to 506 (SGGLDPKCQQ…EFADRVITHP (98 aa)) are Cytoplasmic-facing. The stretch at 488–757 (CSPCWVKLNE…QLAMARIKSG (270 aa)) is one II repeat. A helical membrane pass occupies residues 507–522 (LADLFLVICIVLNICF). Residues 523–531 (LALEHFPMS) lie on the Extracellular side of the membrane. Residues 532 to 560 (EELRSLLHVGNLVFIGIYTIEMILKIIAM) form a helical membrane-spanning segment. At 561–569 (HPYGYFQIS) the chain is on the cytoplasmic side. Residues 570-587 (WNIFDSILVVLELTEILL) traverse the membrane as a helical segment. Topologically, residues 588 to 593 (ADVEGL) are extracellular. A helical membrane pass occupies residues 594-609 (AVLITVPLIFIKLGKY). The Cytoplasmic portion of the chain corresponds to 610–626 (GPPFKSLMRILGSSLMA). Residues 627-655 (LKDLVLLLCIFVYFSAVFGMKLFGRSYKD) traverse the membrane as a helical segment. Topologically, residues 656–673 (CVCHIKEDCQPQRWHMSD) are extracellular. 2 disulfide bridges follow: cysteine 658/cysteine 664 and cysteine 696/cysteine 705. The segment at residues 674–700 (FLHAYMTVFRILCGEWIETLWECMEVA) is an intramembrane region (pore-forming). Glycine 701 is a topological domain (extracellular). Residues 702 to 732 (QAWCIPFYMMVILIGNLLILYLFVTLVSSFS) form a helical membrane-spanning segment. Over 733–934 (YYDATSEVNK…KTCCKIVENS (202 aa)) the chain is Cytoplasmic. Positions 806–834 (YKDQSSSTEKTPVTESESQSLIASPSASE) are enriched in polar residues. The disordered stretch occupies residues 806-875 (YKDQSSSTEK…MKQSSSSECS (70 aa)). Serine 843 is subject to Phosphoserine. The stretch at 916–1224 (NGKIWKNIRK…KKQYRALKKL (309 aa)) is one III repeat. The helical transmembrane segment at 935 to 953 (WFECFIGLVTLLCTGTLAL) threads the bilayer. Topologically, residues 954-961 (EDIYIDQR) are extracellular. A helical transmembrane segment spans residues 962–990 (KTTKILLEYADMIFAYIFILEMLLKWVAY). The Cytoplasmic segment spans residues 991-998 (GFKAFFSN). The chain crosses the membrane as a helical span at residues 999 to 1020 (NWYKLDFMVVIVFCLSLIGKTR). Glutamate 1021 is a topological domain (extracellular). Residues 1022-1040 (DLNPLTSIKFLRALRVLSQ) form a helical membrane-spanning segment. Topologically, residues 1041–1055 (FERMKVVLRALIKTT) are cytoplasmic. The chain crosses the membrane as a helical span at residues 1056–1080 (LPTVSVFLVCLMIWLLFSVIGVQLF). At 1081 to 1127 (AGKFYECIDPTKGERFPVFEVMNKSQCEKLLFNESMPWENAKLNFDN) the chain is on the extracellular side. A disulfide bond links cysteine 1087 and cysteine 1107. 2 N-linked (GlcNAc...) asparagine glycosylation sites follow: asparagine 1103 and asparagine 1113. An intramembrane region (pore-forming) is located at residues 1128 to 1154 (VGNGFLSLLQVATFNGWISIMNSAIDS). Residues 1155–1167 (VGVNMQPSFEYNL) lie on the Extracellular side of the membrane. Residues 1168-1202 (YMYSYFIIFVIFGLFLPLCMLIGVIIRNFNKQKIK) form a helical membrane-spanning segment. At 1203-1250 (QGGSNIFITVKQKKQYRALKKLLYADVQKPTPRPRNKFQGFLFDLVTH) the chain is on the cytoplasmic side. The IV repeat unit spans residues 1233–1531 (TPRPRNKFQG…WNRFDPDRTQ (299 aa)). The helical transmembrane segment at 1251-1272 (RVFNVIIILLICFQATTIMIQK) threads the bilayer. The Extracellular portion of the chain corresponds to 1273 to 1276 (DEQS). Residues 1277–1305 (PQMETAIFWMNSIFVMLFTLECILKLTAF) form a helical membrane-spanning segment. Residues 1306–1312 (RCHYFTS) are Cytoplasmic-facing. A helical membrane pass occupies residues 1313-1338 (AWNVHDFMVVIFSITGLLLPLTIGQY). Residues 1339 to 1341 (FVP) lie on the Extracellular side of the membrane. A helical membrane pass occupies residues 1342 to 1362 (PSLVQLILLSRVIHILRPGKG). Over 1363–1377 (PKVFHDLMLPLILAL) the chain is Cytoplasmic. The chain crosses the membrane as a helical span at residues 1378 to 1402 (PALLNISLLIFLVMFIYAIFGMYNF). Over 1403 to 1420 (AYVKKEAGINDVSNFETF) the chain is Extracellular. The pore-forming intramembrane region spans 1421-1444 (GSSMLCLFQVTTFSGWDGMLDAIF). Over 1445-1468 (NSQWSDCDPDKINPGTQVKGDCGS) the chain is Extracellular. A disulfide bond links cysteine 1451 and cysteine 1466. A helical transmembrane segment spans residues 1469–1504 (PSVGISYFVSYILISWLIIVNMYIVLIMEFLSIPSQ). At 1505–1681 (KKSRTLSEDD…EEKASIQTQI (177 aa)) the chain is on the cytoplasmic side. Residues 1647–1662 (NVSDTPAIDDRRDDLT) are compositionally biased toward basic and acidic residues. Positions 1647 to 1681 (NVSDTPAIDDRRDDLTSKGAHSGKIEEKASIQTQI) are disordered.

Belongs to the sodium channel (TC 1.A.1.10) family. SCN7A subfamily. In terms of assembly, the sodium channel formed by SCN7A is probably a heterooligomeric complex consisting of the ion conducting pore forming alpha subunit SCN7A and regulatory beta subunits such as SCN3B. Interacts with ATP1A1; activates ATP1A1 and thereby indirectly signals to nearby neurons to regulate sodium homeostasis. In terms of tissue distribution, not tissue specific but widely expressed. Expressed in regions of the central nervous system that control body fluid ionic balance.

The protein localises to the cell membrane. It carries out the reaction Na(+)(in) = Na(+)(out). Its function is as follows. Sodium leak channel functioning as an osmosensor regulating sodium ion levels in various tissues and organs. While most sodium channels are voltage-gated, SCN7A is not and lets sodium flow through membrane along its concentration gradient. In glial cells of the central nervous system, senses body-fluid sodium levels and controls salt intake behavior as well as voluntary water intake through activation of nearby neurons to maintain appropriate sodium levels in the body. By mediating sodium influx into keratinocytes, also plays a role in skin barrier homeostasis. The protein is Sodium channel protein type 7 subunit alpha of Mus musculus (Mouse).